We begin with the raw amino-acid sequence, 295 residues long: Phosphatidylserine decarboxylase proenzyme (295 aa).

Residues Asp-113, His-169, and Ser-256 each act as charge relay system; for autoendoproteolytic cleavage activity in the active site. The active-site Schiff-base intermediate with substrate; via pyruvic acid; for decarboxylase activity is the Ser-256. Position 256 is a pyruvic acid (Ser); by autocatalysis (Ser-256).

The protein belongs to the phosphatidylserine decarboxylase family. PSD-B subfamily. Prokaryotic type II sub-subfamily. Heterodimer of a large membrane-associated beta subunit and a small pyruvoyl-containing alpha subunit. Pyruvate serves as cofactor. Is synthesized initially as an inactive proenzyme. Formation of the active enzyme involves a self-maturation process in which the active site pyruvoyl group is generated from an internal serine residue via an autocatalytic post-translational modification. Two non-identical subunits are generated from the proenzyme in this reaction, and the pyruvate is formed at the N-terminus of the alpha chain, which is derived from the carboxyl end of the proenzyme. The autoendoproteolytic cleavage occurs by a canonical serine protease mechanism, in which the side chain hydroxyl group of the serine supplies its oxygen atom to form the C-terminus of the beta chain, while the remainder of the serine residue undergoes an oxidative deamination to produce ammonia and the pyruvoyl prosthetic group on the alpha chain. During this reaction, the Ser that is part of the protease active site of the proenzyme becomes the pyruvoyl prosthetic group, which constitutes an essential element of the active site of the mature decarboxylase.

It is found in the cell membrane. It carries out the reaction a 1,2-diacyl-sn-glycero-3-phospho-L-serine + H(+) = a 1,2-diacyl-sn-glycero-3-phosphoethanolamine + CO2. Its pathway is phospholipid metabolism; phosphatidylethanolamine biosynthesis; phosphatidylethanolamine from CDP-diacylglycerol: step 2/2. Functionally, catalyzes the formation of phosphatidylethanolamine (PtdEtn) from phosphatidylserine (PtdSer). In Clostridium novyi (strain NT), this protein is Phosphatidylserine decarboxylase proenzyme.